Consider the following 630-residue polypeptide: A-type voltage-gated potassium channel KCND2 (630 aa).

Residues 1–184 (MAAGVAAWLP…FENPHTSTMA (184 aa)) are Cytoplasmic-facing. An interaction with KCNIP1, KCNIP2, and other family members region spans residues 2–20 (AAGVAAWLPFARAAAIGWM). The residue at position 38 (Thr-38) is a Phosphothreonine. Residues 71-90 (ERDFFYHPETQQYFFDRDPD) are interaction with KCNIP1. Zn(2+) is bound by residues His-105, Cys-111, Cys-132, and Cys-133. Residues 185 to 206 (LVFYYVTGFFIAVSVIANVVET) traverse the membrane as a helical segment. Topologically, residues 207-226 (VPCGSSPGHIKELPCGERYA) are extracellular. Residues 227–249 (VAFFCLDTACVMIFTVEYLLRLA) traverse the membrane as a helical segment. The Cytoplasmic portion of the chain corresponds to 250-256 (AAPSRYR). A helical transmembrane segment spans residues 257–281 (FVRSVMSIIDVVAILPYYIGLVMTD). Over 282–287 (NEDVSG) the chain is Extracellular. The chain crosses the membrane as a helical; Voltage-sensor span at residues 288–307 (AFVTLRVFRVFRIFKFSRHS). At 308 to 321 (QGLRILGYTLKSCA) the chain is on the cytoplasmic side. Positions 308 to 321 (QGLRILGYTLKSCA) are S4-S5 linker. A helical transmembrane segment spans residues 322-345 (SELGFLLFSLTMAIIIFATVMFYA). Over 346–357 (EKGSSASKFTSI) the chain is Extracellular. The helical intramembrane region spans 358 to 369 (PAAFWYTIVTMT). Residues Thr-370, Leu-371, Gly-372, and Tyr-373 each coordinate K(+). The Selectivity filter signature appears at 370 to 375 (TLGYGD). The stretch at 370–377 (TLGYGDMV) is an intramembrane region. Topologically, residues 378–380 (PKT) are extracellular. The chain crosses the membrane as a helical span at residues 381 to 403 (IAGKIFGSICSLSGVLVIALPVP). Over 404-630 (VIVSNFSRIY…GGNIVRVSAL (227 aa)) the chain is Cytoplasmic. Ser-438 carries the post-translational modification Phosphoserine. The tract at residues 474–489 (FETQHHHLLHCLEKTT) is required for dendritic targeting. Positions 474–630 (FETQHHHLLH…GGNIVRVSAL (157 aa)) are important for normal channel activation and inactivation, for interaction with KCNIP2, and probably other family members as well. A phosphoserine mark is found at Ser-548, Ser-552, Ser-572, and Ser-575. The segment at 600–630 (IPTPPVTTPEGDDRPESPEYSGGNIVRVSAL) is disordered. 2 positions are modified to phosphothreonine: Thr-602 and Thr-607. A Phosphoserine modification is found at Ser-616. The PDZ-binding motif lies at 627-630 (VSAL).

This sequence belongs to the potassium channel family. D (Shal) (TC 1.A.1.2) subfamily. Kv4.2/KCND2 sub-subfamily. Homotetramer or heterotetramer with KCND1 or KCND3. Associates with the regulatory subunits KCNIP2, KCNIP3 and KCNIP4. Interacts with the regulatory subunit KCNIP1; this interaction mediates the capture of both the N- and C-terminus of KCND2, preventing N-type inactivation and stabilizing the S6 conformation, thereby accelerating closed state inactivation and recovery. In vivo, probably exists as heteromeric complex containing variable proportions of KCND1, KCND2, KCND3, KCNIP1, KCNIP2, KCNIP3, KCNIP4, DPP6 and DPP10. The tetrameric channel can associate with up to four regulatory subunits, such as KCNIP2 or KCNIP4. Interaction with four KCNIP4 chains does not reduce interaction with DPP10. Interacts with DLG4 and NCS1/FREQ. Interacts with DLG1. Probably part of a complex consisting of KCNIP1, KCNIP2 isoform 3 and KCND2. Interacts with FLNA, FLNC and DPP10. Interacts (via S1 and S2 helices) with DPP6; this interaction stabilizes the conformation of the S1-S2 helices and facilitates S4 conformational change, including S4 sliding up and down, thereby accelerating activation, inactivation, and recovery. Post-translationally, phosphorylation at Ser-438 in response to MAPK activation is increased in stimulated dendrites. Interaction with KCNIP2 and DPP6 propomtes phosphorylation by PKA at Ser-552. Phosphorylation at Ser-552 has no effect on interaction with KCNIP3, but is required for the regulation of channel activity by KCNIP3. Phosphorylation at Ser-552 leads to KCND2 internalization. Phosphorylated by MAPK in response to signaling via the metabotropic glutamate receptor GRM5. Phosphorylation at Ser-616 is required for the down-regulation of neuronal A-type currents in response to signaling via GRM5. Detected in ovary, in corpus luteum and in granulosa and theca cells in the follicle (at protein level). Highly expressed throughout the brain. Detected in amygdala, caudate nucleus, cerebellum, hippocampus, substantia nigra and thalamus. Expression is not detectable or very low in heart, kidney, liver, lung, pancreas and skeletal muscle. Not detectable in human heart atrium.

It localises to the cell membrane. The protein localises to the cell projection. Its subcellular location is the dendrite. The protein resides in the synapse. It is found in the perikaryon. It localises to the postsynaptic cell membrane. The protein localises to the dendritic spine. Its subcellular location is the cell junction. The enzyme catalyses K(+)(in) = K(+)(out). In terms of biological role, voltage-gated potassium channel that mediates transmembrane potassium transport in excitable membranes, primarily in the brain. Mediates the major part of the dendritic A-type current I(SA) in brain neurons. This current is activated at membrane potentials that are below the threshold for action potentials. It regulates neuronal excitability, prolongs the latency before the first spike in a series of action potentials, regulates the frequency of repetitive action potential firing, shortens the duration of action potentials and regulates the back-propagation of action potentials from the neuronal cell body to the dendrites. Contributes to the regulation of the circadian rhythm of action potential firing in suprachiasmatic nucleus neurons, which regulates the circadian rhythm of locomotor activity. Functions downstream of the metabotropic glutamate receptor GRM5 and plays a role in neuronal excitability and in nociception mediated by activation of GRM5. Mediates the transient outward current I(to) in rodent heart left ventricle apex cells, but not in human heart, where this current is mediated by another family member. Forms tetrameric potassium-selective channels through which potassium ions pass in accordance with their electrochemical gradient. The channel alternates between opened and closed conformations in response to the voltage difference across the membrane. Can form functional homotetrameric channels and heterotetrameric channels that contain variable proportions of KCND2 and KCND3; channel properties depend on the type of pore-forming alpha subunits that are part of the channel. In vivo, membranes probably contain a mixture of heteromeric potassium channel complexes. Interaction with specific isoforms of the regulatory subunits KCNIP1, KCNIP2, KCNIP3 or KCNIP4 strongly increases expression at the cell surface and thereby increases channel activity; it modulates the kinetics of channel activation and inactivation, shifts the threshold for channel activation to more negative voltage values, shifts the threshold for inactivation to less negative voltages and accelerates recovery after inactivation. Likewise, interaction with DPP6 or DPP10 promotes expression at the cell membrane and regulates both channel characteristics and activity. Upon depolarization, the channel goes from a resting closed state (C state) to an activated but non-conducting state (C* state), from there, the channel may either inactivate (I state) or open (O state). This chain is A-type voltage-gated potassium channel KCND2, found in Homo sapiens (Human).